We begin with the raw amino-acid sequence, 507 residues long: Flagellar hook-associated protein 1 (507 aa).

The protein belongs to the flagella basal body rod proteins family.

The protein resides in the secreted. Its subcellular location is the bacterial flagellum. The polypeptide is Flagellar hook-associated protein 1 (flgK) (Bacillus subtilis (strain 168)).